Here is a 250-residue protein sequence, read N- to C-terminus: Proteasome subunit alpha type-4-1 (250 aa).

It belongs to the peptidase T1A family. As to quaternary structure, the 26S proteasome consists of a 20S proteasome core and two 19S regulatory subunits. The 20S proteasome core is composed of 28 subunits that are arranged in four stacked rings, resulting in a barrel-shaped structure. The two end rings are each formed by seven alpha subunits, and the two central rings are each formed by seven beta subunits. The catalytic chamber with the active sites is on the inside of the barrel.

It localises to the cytoplasm. The protein resides in the nucleus. In terms of biological role, the proteasome is a multicatalytic proteinase complex which is characterized by its ability to cleave peptides with Arg, Phe, Tyr, Leu, and Glu adjacent to the leaving group at neutral or slightly basic pH. The proteasome has an ATP-dependent proteolytic activity. The protein is Proteasome subunit alpha type-4-1 of Oryza sativa subsp. indica (Rice).